The primary structure comprises 482 residues: Cysteine--tRNA ligase (482 aa).

Residue Cys28 coordinates Zn(2+). The 'HIGH' region motif lies at 30 to 40; the sequence is PTVYNFLHVGN. Zn(2+)-binding residues include Cys208, His233, and Glu237. A 'KMSKS' region motif is present at residues 265–269; the sequence is KMSKS. Residue Lys268 participates in ATP binding.

The protein belongs to the class-I aminoacyl-tRNA synthetase family. In terms of assembly, monomer. Requires Zn(2+) as cofactor.

It is found in the cytoplasm. The enzyme catalyses tRNA(Cys) + L-cysteine + ATP = L-cysteinyl-tRNA(Cys) + AMP + diphosphate. This is Cysteine--tRNA ligase from Bdellovibrio bacteriovorus (strain ATCC 15356 / DSM 50701 / NCIMB 9529 / HD100).